A 77-amino-acid polypeptide reads, in one-letter code: Sec-independent protein translocase protein TatA (77 aa).

The chain crosses the membrane as a helical span at residues 1-21 (MGGLSIWHWLIVLLIVALVFG). Positions 43–77 (MKESEAPADAQQLPRSGSVNVDAKDAARSSDSNKA) are disordered. Over residues 64 to 77 (DAKDAARSSDSNKA) the composition is skewed to basic and acidic residues.

It belongs to the TatA/E family. As to quaternary structure, the Tat system comprises two distinct complexes: a TatABC complex, containing multiple copies of TatA, TatB and TatC subunits, and a separate TatA complex, containing only TatA subunits. Substrates initially bind to the TatABC complex, which probably triggers association of the separate TatA complex to form the active translocon.

The protein resides in the cell inner membrane. Functionally, part of the twin-arginine translocation (Tat) system that transports large folded proteins containing a characteristic twin-arginine motif in their signal peptide across membranes. TatA could form the protein-conducting channel of the Tat system. In Burkholderia mallei (strain NCTC 10247), this protein is Sec-independent protein translocase protein TatA.